A 486-amino-acid polypeptide reads, in one-letter code: UDP-N-acetylmuramate--L-alanine ligase (486 aa).

ATP is bound at residue 123–129 (GTHGKTT).

The protein belongs to the MurCDEF family.

The protein resides in the cytoplasm. It carries out the reaction UDP-N-acetyl-alpha-D-muramate + L-alanine + ATP = UDP-N-acetyl-alpha-D-muramoyl-L-alanine + ADP + phosphate + H(+). Its pathway is cell wall biogenesis; peptidoglycan biosynthesis. Functionally, cell wall formation. The chain is UDP-N-acetylmuramate--L-alanine ligase from Pseudomonas syringae pv. syringae (strain B728a).